Here is a 321-residue protein sequence, read N- to C-terminus: MTKYALVGDVGGTNARLALCDIASGEISQAKTYSGLDYPSLEAVVRVYLDEHSVSVEDGCIAIACPITGDWVAMTNHTWAFSIAEMKKNLGFSHLEIINDFTAVSMAIPMLKKEHLIQFGGGEPVDGKPIAVYGAGTGLGVAHLVHVDKRWISLPGEGGHVDFAPNSEEEAMILEILRAEIGHVSAERVLSGPGLVNLYRAIVKSDNRLPENLRPKDITERALADSCIDCRRALSLFCVIMGRFGGDLALTMGTFGGVYIAGGIVPRFLEFFKASGFRGGFEDKGRFKDYVHGIPVYLIVHDNPGLLGSGAHLRQTLGHIL.

8-13 (GDVGGT) is a binding site for ATP.

The protein belongs to the bacterial glucokinase family.

It is found in the cytoplasm. The enzyme catalyses D-glucose + ATP = D-glucose 6-phosphate + ADP + H(+). The chain is Glucokinase from Salmonella agona (strain SL483).